The chain runs to 45 residues: Enterotoxin (45 aa).

In terms of assembly, one of 3 components (of 35, 45 and 105 kDa) of the enterotoxin.

Its function is as follows. One of 3 components required for cytotoxicity (tested in African green monkey Vero cells); the complex is not hemolytic. This Bacillus cereus protein is Enterotoxin.